The chain runs to 129 residues: MNSATSLMCFALLLISPLCMGYTAEDREADSRRVAEIIKNSQDDNSKINSIQELLDIYKRLYPSLTPEERESIDNFVNEHTDEVLVDGVPSQGGRKTKFAKKILTEATKGVATGFFEELGSKLAGLFTG.

An N-terminal signal peptide occupies residues 1-21; it reads MNSATSLMCFALLLISPLCMG.

Belongs to the Turandot family.

It is found in the secreted. A humoral factor that may play a role in stress tolerance. The sequence is that of Protein Turandot B1 (TotB1) from Drosophila erecta (Fruit fly).